Here is a 208-residue protein sequence, read N- to C-terminus: FMN-dependent NADH:quinone oxidoreductase 1 (208 aa).

Belongs to the azoreductase type 1 family. In terms of assembly, homodimer. The cofactor is FMN.

The enzyme catalyses 2 a quinone + NADH + H(+) = 2 a 1,4-benzosemiquinone + NAD(+). It carries out the reaction N,N-dimethyl-1,4-phenylenediamine + anthranilate + 2 NAD(+) = 2-(4-dimethylaminophenyl)diazenylbenzoate + 2 NADH + 2 H(+). Functionally, quinone reductase that provides resistance to thiol-specific stress caused by electrophilic quinones. Also exhibits azoreductase activity. Catalyzes the reductive cleavage of the azo bond in aromatic azo compounds to the corresponding amines. This chain is FMN-dependent NADH:quinone oxidoreductase 1, found in Bacillus licheniformis (strain ATCC 14580 / DSM 13 / JCM 2505 / CCUG 7422 / NBRC 12200 / NCIMB 9375 / NCTC 10341 / NRRL NRS-1264 / Gibson 46).